The primary structure comprises 417 residues: Mast cell carboxypeptidase A (417 aa).

The first 15 residues, 1 to 15 (MRFFLLMAVIYTTLA), serve as a signal peptide directing secretion. Positions 16–109 (IAPVHFDREK…IEKQFDVKDE (94 aa)) are cleaved as a propeptide — activation peptide. A Peptidase M14 domain is found at 118 to 412 (KYNDWDKIVS…LSVKFIAKYI (295 aa)). Cystine bridges form between cysteine 173–cysteine 186 and cysteine 245–cysteine 268. Zn(2+) is bound by residues histidine 176 and glutamate 179. Histidine 304 contributes to the Zn(2+) binding site. Glutamate 378 serves as the catalytic Proton donor/acceptor.

Belongs to the peptidase M14 family. The cofactor is Zn(2+).

The protein resides in the cytoplasmic vesicle. The protein localises to the secretory vesicle. It carries out the reaction Release of a C-terminal amino acid, but little or no action with -Asp, -Glu, -Arg, -Lys or -Pro.. This is Mast cell carboxypeptidase A (Cpa3) from Mus musculus (Mouse).